Consider the following 177-residue polypeptide: MSVSDIISKSLIEYDSTTPTIQYLIENTYFEGYKTNSDTERSRLKFIHKDTNKVLFETEIETLAIYYDKLNIWSWSWSQVGLYNSENYLAKEMLLYALKLGYDMSYIKSIITTSRGVIRDPIQVDINLAIGSGIIKQPYIYPYVYEVEKRKLYYYIILLNKQELDKLSKKLNKQSNE.

This is an uncharacterized protein from Acanthamoeba polyphaga mimivirus (APMV).